We begin with the raw amino-acid sequence, 421 residues long: Histidine--tRNA ligase (421 aa).

The protein belongs to the class-II aminoacyl-tRNA synthetase family. In terms of assembly, homodimer.

The protein resides in the cytoplasm. The catalysed reaction is tRNA(His) + L-histidine + ATP = L-histidyl-tRNA(His) + AMP + diphosphate + H(+). The chain is Histidine--tRNA ligase from Thermus thermophilus (strain ATCC BAA-163 / DSM 7039 / HB27).